Here is a 98-residue protein sequence, read N- to C-terminus: ATP synthase subunit alpha, chloroplastic (98 aa).

It belongs to the ATPase alpha/beta chains family. As to quaternary structure, F-type ATPases have 2 components, CF(1) - the catalytic core - and CF(0) - the membrane proton channel. CF(1) has five subunits: alpha(3), beta(3), gamma(1), delta(1), epsilon(1). CF(0) has four main subunits: a, b, b' and c.

Its subcellular location is the plastid. It is found in the chloroplast thylakoid membrane. It carries out the reaction ATP + H2O + 4 H(+)(in) = ADP + phosphate + 5 H(+)(out). Produces ATP from ADP in the presence of a proton gradient across the membrane. The alpha chain is a regulatory subunit. The polypeptide is ATP synthase subunit alpha, chloroplastic (atpA) (Populus euphratica (Euphrates poplar)).